A 707-amino-acid polypeptide reads, in one-letter code: ATP-dependent RNA helicase DHX33 (707 aa).

The disordered stretch occupies residues 1 to 64 (MPEEAGFPPA…LAQPSASPYP (64 aa)). The required for nucleolar location stretch occupies residues 1–80 (MPEEAGFPPA…RRSLPIFQAR (80 aa)). Gly residues predominate over residues 39–49 (GSGGRGGGGGR). A compositionally biased stretch (low complexity) spans 50–64 (RQQPPLAQPSASPYP). A Helicase ATP-binding domain is found at 84–252 (LAQLRNLDNA…FNGAPVLYLE (169 aa)). ATP is bound at residue 97-104 (GETGSGKT). The short motif at 194–197 (DEAH) is the DEAH box element. In terms of domain architecture, Helicase C-terminal spans 277–450 (SVFQIHQEAP…SVMLQLLAMK (174 aa)). Residues 471 to 562 (AIAQLDLLGA…ISSEGDHMTL (92 aa)) are HA2; required for interaction with EIF3G and RPL26. The Critical for rDNA-binding signature appears at 547–558 (GVRKKFISSEGD).

The protein belongs to the DEAD box helicase family. DEAH subfamily. As to quaternary structure, interacts with UBTF. Interacts with DDX3X, EIF3G and EIF3H; the interaction is independent of RNA. Interacts (via HA2 region and Helicase C-terminal domain) with the components of the large ribosomal subunit RPL3, RPL7, RPL26 and RPL27. Interacts (via DEAH box) with NLRP3 (via NACHT domain). Binds to mRNA. Binds to double-stranded RNA (via the helicase C-terminal domain). Interacts (via the helicase C-terminal domain) with MAVS. Ubiquitinated, leading to its degradation by the proteasome. Deubiquitinated by USP36.

The protein resides in the nucleus. The protein localises to the nucleolus. Its subcellular location is the nucleoplasm. It localises to the cytoplasm. It is found in the inflammasome. It catalyses the reaction ATP + H2O = ADP + phosphate + H(+). In terms of biological role, implicated in nucleolar organization, ribosome biogenesis, protein synthesis and cytoplasmic dsRNA sensing. Stimulates RNA polymerase I transcription of the 47S precursor rRNA. Associates with ribosomal DNA (rDNA) loci where it is involved in POLR1A recruitment. In the cytoplasm, promotes elongation-competent 80S ribosome assembly at the late stage of mRNA translation initiation. Senses cytosolic dsRNA mediating NLRP3 inflammasome formation in macrophages and type I interferon production in myeloid dendritic cells. Required for NLRP3 activation induced by viral dsRNA and bacterial RNA. In dendritic cells, required for induction of type I interferon production induced by cytoplasmic dsRNA via the activation of MAPK and NF-kappa-B signaling pathways. The chain is ATP-dependent RNA helicase DHX33 from Homo sapiens (Human).